The primary structure comprises 109 residues: Probable endoribonuclease MazF5 (109 aa).

The protein belongs to the PemK/MazF family. Forms a complex with cognate antitoxin MazE5.

Functionally, toxic component of a type II toxin-antitoxin (TA) system. Upon expression in M.smegmatis inhibits colony formation. Its toxic effect is neutralized by coexpression with cognate antitoxin MazE5. Probably an endoribonuclease. The sequence is that of Probable endoribonuclease MazF5 (mazF5) from Mycobacterium tuberculosis (strain ATCC 25618 / H37Rv).